A 382-amino-acid chain; its full sequence is uncharacterized protein (382 aa).

12 consecutive transmembrane segments (helical) span residues 14–34, 45–65, 75–95, 102–122, 131–151, 157–177, 204–224, 235–255, 265–284, 289–311, 325–345, and 349–369; these read GLLL…LWLA, MVSS…GYLI, YLAS…VGFW, FIAG…LMCS, LLAA…LLVS, LLHV…PLLF, LGVN…GLMP, ASIG…QWPV, LLVL…VMLT, APAL…AWAC, ALLL…AMLM, and SDNL…LMLL.

It belongs to the major facilitator superfamily. YcaD (TC 2.A.1.26) family.

The protein localises to the cell inner membrane. This is an uncharacterized protein from Salmonella arizonae (strain ATCC BAA-731 / CDC346-86 / RSK2980).